Here is a 1332-residue protein sequence, read N- to C-terminus: Aldehyde oxidase 1 (1332 aa).

Residues 4-91 enclose the 2Fe-2S ferredoxin-type domain; that stretch reads STLYFYVNGR…GAAVTTVEGV (88 aa). [2Fe-2S] cluster-binding residues include Cys43, Cys48, Cys51, and Cys73. Mo-molybdopterin is bound at residue Gln112. Cys113, Cys116, Cys148, and Cys150 together coordinate [2Fe-2S] cluster. Residue Cys150 participates in Mo-molybdopterin binding. Residues 234-419 enclose the FAD-binding PCMH-type domain; the sequence is FTGDRVTWIS…LSVTIPYSRK (186 aa). FAD-binding positions include 262–269, Ala343, Ser352, His356, Asp365, and Leu409; that span reads VVMGNTSV. Mo-molybdopterin-binding positions include 800–801, Met1041, 1082–1085, Gln1197, and Leu1262; these read AF and GSVV. Glu1264 acts as the Proton acceptor; for azaheterocycle hydroxylase activity in catalysis.

It belongs to the xanthine dehydrogenase family. Homodimer. The cofactor is [2Fe-2S] cluster. FAD is required as a cofactor. It depends on Mo-molybdopterin as a cofactor. In terms of tissue distribution, expressed in liver.

It is found in the cytoplasm. The catalysed reaction is an aldehyde + O2 + H2O = a carboxylate + H2O2 + H(+). The enzyme catalyses retinal + O2 + H2O = retinoate + H2O2 + H(+). Inhibited by menadione and isovanillin. Not inhibited by allopurinol, a xanthine dehydrogenase potent inhibitor. Functionally, oxidase with broad substrate specificity, oxidizing aromatic azaheterocycles, such as N1-methylnicotinamide, N-methylphthalazinium and phthalazine, as well as aldehydes, such as benzaldehyde, retinal, pyridoxal, and vanillin. Plays a key role in the metabolism of xenobiotics and drugs containing aromatic azaheterocyclic substituents. Participates in the bioactivation of prodrugs such as famciclovir, catalyzing the oxidation step from 6-deoxypenciclovir to penciclovir, which is a potent antiviral agent. Is probably involved in the regulation of reactive oxygen species homeostasis. May be a prominent source of superoxide generation via the one-electron reduction of molecular oxygen. May also catalyze nitric oxide (NO) production via the reduction of nitrite to NO with NADH or aldehyde as electron donor. May play a role in adipogenesis. The chain is Aldehyde oxidase 1 from Cavia porcellus (Guinea pig).